The sequence spans 1663 residues: Centrosomal protein of 152 kDa (1663 aa).

Positions 1–60 are disordered; the sequence is MSIDFDSGALQTQQEDEEYDKEDYAREQELQQLLTDLPHDMLDDSLSSSPEPSYSDCSGH. Over residues 44–57 the composition is skewed to low complexity; that stretch reads DSLSSSPEPSYSDC. 7 coiled-coil regions span residues 266–516, 571–664, 696–796, 843–886, 946–977, 1014–1047, and 1182–1288; these read LQVL…ARLG, ELER…KHLL, QDKK…VTAK, SDCI…VEVA, DFTV…ALLK, RNKL…AERL, and VQQL…KNDM. Disordered regions lie at residues 1383 to 1408 and 1595 to 1628; these read ETTQ…NQNI and KRKD…SDVG. The span at 1603–1613 shows a compositional bias: polar residues; sequence RKYSNKIQEPS.

The protein belongs to the CEP152 family.

It is found in the cytoplasm. The protein localises to the cytoskeleton. Its subcellular location is the microtubule organizing center. It localises to the centrosome. The protein resides in the centriole. In terms of biological role, necessary for centrosome duplication; the function also seems to involve cep63, cdk5rap2 and wdr62 through a stepwise assembled complex at the centrosome that recruits cdk2 required for centriole duplication. Acts as a molecular scaffold facilitating the interaction of plk4 and cpap, 2 molecules involved in centriole formation. Also plays a key role in deuterosome-mediated centriole amplification in multiciliated that can generate more than 100 centrioles. Overexpression of cep152 can drive amplification of centrioles. The polypeptide is Centrosomal protein of 152 kDa (cep152) (Xenopus laevis (African clawed frog)).